A 436-amino-acid polypeptide reads, in one-letter code: Nicotinate phosphoribosyltransferase (436 aa).

His231 carries the post-translational modification Phosphohistidine; by autocatalysis.

Belongs to the NAPRTase family. In terms of processing, transiently phosphorylated on a His residue during the reaction cycle. Phosphorylation strongly increases the affinity for substrates and increases the rate of nicotinate D-ribonucleotide production. Dephosphorylation regenerates the low-affinity form of the enzyme, leading to product release.

The enzyme catalyses nicotinate + 5-phospho-alpha-D-ribose 1-diphosphate + ATP + H2O = nicotinate beta-D-ribonucleotide + ADP + phosphate + diphosphate. It participates in cofactor biosynthesis; NAD(+) biosynthesis; nicotinate D-ribonucleotide from nicotinate: step 1/1. Functionally, catalyzes the synthesis of beta-nicotinate D-ribonucleotide from nicotinate and 5-phospho-D-ribose 1-phosphate at the expense of ATP. The polypeptide is Nicotinate phosphoribosyltransferase (Vibrio parahaemolyticus serotype O3:K6 (strain RIMD 2210633)).